The primary structure comprises 131 residues: Profilin-1 (131 aa).

Belongs to the profilin family. Occurs in many kinds of cells as a complex with monomeric actin in a 1:1 ratio. Cytoplasmic distribution in hypocotyls. In root nodules, it is found in all cells, but is more abundant in the vascular tissue as well as the endodermis.

Its subcellular location is the cytoplasm. The protein localises to the cytoskeleton. Its function is as follows. Binds to actin and affects the structure of the cytoskeleton. At high concentrations, profilin prevents the polymerization of actin, whereas it enhances it at low concentrations. By binding to PIP2, it inhibits the formation of IP3 and DG. The sequence is that of Profilin-1 from Phaseolus vulgaris (Kidney bean).